Here is a 65-residue protein sequence, read N- to C-terminus: Large ribosomal subunit protein bL35 (65 aa).

Basic residues predominate over residues 1-11; the sequence is MPKIKTRRSAA. Disordered regions lie at residues 1-24 and 41-65; these read MPKI…KFKR and RMRL…MPYA.

This sequence belongs to the bacterial ribosomal protein bL35 family.

In Nitratidesulfovibrio vulgaris (strain DSM 19637 / Miyazaki F) (Desulfovibrio vulgaris), this protein is Large ribosomal subunit protein bL35.